Reading from the N-terminus, the 216-residue chain is Thiamine-phosphate synthase (216 aa).

4-amino-2-methyl-5-(diphosphooxymethyl)pyrimidine is bound by residues 41–45 (QYREK) and Asn73. Mg(2+) is bound by residues Asp74 and Asp93. Ser111 serves as a coordination point for 4-amino-2-methyl-5-(diphosphooxymethyl)pyrimidine. 137 to 139 (TTT) provides a ligand contact to 2-[(2R,5Z)-2-carboxy-4-methylthiazol-5(2H)-ylidene]ethyl phosphate. Lys140 is a binding site for 4-amino-2-methyl-5-(diphosphooxymethyl)pyrimidine. 2-[(2R,5Z)-2-carboxy-4-methylthiazol-5(2H)-ylidene]ethyl phosphate-binding positions include Gly168 and 188-189 (VS).

It belongs to the thiamine-phosphate synthase family. Mg(2+) serves as cofactor.

The catalysed reaction is 2-[(2R,5Z)-2-carboxy-4-methylthiazol-5(2H)-ylidene]ethyl phosphate + 4-amino-2-methyl-5-(diphosphooxymethyl)pyrimidine + 2 H(+) = thiamine phosphate + CO2 + diphosphate. The enzyme catalyses 2-(2-carboxy-4-methylthiazol-5-yl)ethyl phosphate + 4-amino-2-methyl-5-(diphosphooxymethyl)pyrimidine + 2 H(+) = thiamine phosphate + CO2 + diphosphate. It carries out the reaction 4-methyl-5-(2-phosphooxyethyl)-thiazole + 4-amino-2-methyl-5-(diphosphooxymethyl)pyrimidine + H(+) = thiamine phosphate + diphosphate. It participates in cofactor biosynthesis; thiamine diphosphate biosynthesis; thiamine phosphate from 4-amino-2-methyl-5-diphosphomethylpyrimidine and 4-methyl-5-(2-phosphoethyl)-thiazole: step 1/1. Its function is as follows. Condenses 4-methyl-5-(beta-hydroxyethyl)thiazole monophosphate (THZ-P) and 2-methyl-4-amino-5-hydroxymethyl pyrimidine pyrophosphate (HMP-PP) to form thiamine monophosphate (TMP). The sequence is that of Thiamine-phosphate synthase from Chloroflexus aurantiacus (strain ATCC 29366 / DSM 635 / J-10-fl).